We begin with the raw amino-acid sequence, 249 residues long: Phosphate import ATP-binding protein PstB (249 aa).

One can recognise an ABC transporter domain in the interval 4 to 244 (IQTKDLNLYY…PKDKRTEDYI (241 aa)). An ATP-binding site is contributed by 36 to 43 (GPSGCGKS).

This sequence belongs to the ABC transporter superfamily. Phosphate importer (TC 3.A.1.7) family. In terms of assembly, the complex is composed of two ATP-binding proteins (PstB), two transmembrane proteins (PstC and PstA) and a solute-binding protein (PstS).

The protein resides in the cell membrane. The catalysed reaction is phosphate(out) + ATP + H2O = ADP + 2 phosphate(in) + H(+). Its function is as follows. Part of the ABC transporter complex PstSACB involved in phosphate import. Responsible for energy coupling to the transport system. The sequence is that of Phosphate import ATP-binding protein PstB from Clostridium acetobutylicum (strain ATCC 824 / DSM 792 / JCM 1419 / IAM 19013 / LMG 5710 / NBRC 13948 / NRRL B-527 / VKM B-1787 / 2291 / W).